Here is a 101-residue protein sequence, read N- to C-terminus: Small ribosomal subunit protein uS14 (101 aa).

The protein belongs to the universal ribosomal protein uS14 family. In terms of assembly, part of the 30S ribosomal subunit. Contacts proteins S3 and S10.

Functionally, binds 16S rRNA, required for the assembly of 30S particles and may also be responsible for determining the conformation of the 16S rRNA at the A site. This chain is Small ribosomal subunit protein uS14, found in Proteus mirabilis (strain HI4320).